Here is a 582-residue protein sequence, read N- to C-terminus: 2-isopropylmalate synthase (582 aa).

In terms of domain architecture, Pyruvate carboxyltransferase spans 40–314 (PRWCAVDLRD…DPMIDFSDID (275 aa)). Residues aspartate 49, histidine 253, histidine 255, and asparagine 289 each coordinate Mg(2+). The regulatory domain stretch occupies residues 456–582 (SPAGHPGGQW…NRAIRDNQVD (127 aa)).

It belongs to the alpha-IPM synthase/homocitrate synthase family. LeuA type 2 subfamily. In terms of assembly, homodimer. Mg(2+) serves as cofactor.

It is found in the cytoplasm. The enzyme catalyses 3-methyl-2-oxobutanoate + acetyl-CoA + H2O = (2S)-2-isopropylmalate + CoA + H(+). Its pathway is amino-acid biosynthesis; L-leucine biosynthesis; L-leucine from 3-methyl-2-oxobutanoate: step 1/4. In terms of biological role, catalyzes the condensation of the acetyl group of acetyl-CoA with 3-methyl-2-oxobutanoate (2-ketoisovalerate) to form 3-carboxy-3-hydroxy-4-methylpentanoate (2-isopropylmalate). This is 2-isopropylmalate synthase from Renibacterium salmoninarum (strain ATCC 33209 / DSM 20767 / JCM 11484 / NBRC 15589 / NCIMB 2235).